The chain runs to 266 residues: Glucosamine-6-phosphate deaminase (266 aa).

D72 acts as the Proton acceptor; for enolization step in catalysis. The For ring-opening step role is filled by D141. The active-site Proton acceptor; for ring-opening step is H143. Catalysis depends on E148, which acts as the For ring-opening step.

The protein belongs to the glucosamine/galactosamine-6-phosphate isomerase family. NagB subfamily. In terms of assembly, homohexamer.

The enzyme catalyses alpha-D-glucosamine 6-phosphate + H2O = beta-D-fructose 6-phosphate + NH4(+). It participates in amino-sugar metabolism; N-acetylneuraminate degradation; D-fructose 6-phosphate from N-acetylneuraminate: step 5/5. Allosterically activated by N-acetylglucosamine 6-phosphate (GlcNAc6P). In terms of biological role, catalyzes the reversible isomerization-deamination of glucosamine 6-phosphate (GlcN6P) to form fructose 6-phosphate (Fru6P) and ammonium ion. This is Glucosamine-6-phosphate deaminase from Vibrio campbellii (strain ATCC BAA-1116).